The following is a 165-amino-acid chain: MIKSIWIAGGCFWGIQKYFDSIIGVNHTVVGYSQGNVINPSYEQVCTQTTNHTETVQIDYDDRFVSLISILEHLYQIIDPFSLNKQGDDVGSQYRSGIYYVDHDDEFIIKDFLLKKQNQTPKKIMIEVERLRNFNIAEEYHQKYLDKNPNSYCHVDLSLSKKEFR.

The active site involves C11.

The protein belongs to the MsrA Met sulfoxide reductase family.

It catalyses the reaction L-methionyl-[protein] + [thioredoxin]-disulfide + H2O = L-methionyl-(S)-S-oxide-[protein] + [thioredoxin]-dithiol. The catalysed reaction is [thioredoxin]-disulfide + L-methionine + H2O = L-methionine (S)-S-oxide + [thioredoxin]-dithiol. In terms of biological role, has an important function as a repair enzyme for proteins that have been inactivated by oxidation. Catalyzes the reversible oxidation-reduction of methionine sulfoxide in proteins to methionine. The chain is Peptide methionine sulfoxide reductase MsrA from Ureaplasma parvum serovar 3 (strain ATCC 27815 / 27 / NCTC 11736).